We begin with the raw amino-acid sequence, 311 residues long: Ribosomal RNA small subunit methyltransferase H (311 aa).

S-adenosyl-L-methionine is bound by residues 34 to 36, aspartate 54, phenylalanine 80, aspartate 104, and glutamine 111; that span reads GGH.

It belongs to the methyltransferase superfamily. RsmH family.

The protein localises to the cytoplasm. It carries out the reaction cytidine(1402) in 16S rRNA + S-adenosyl-L-methionine = N(4)-methylcytidine(1402) in 16S rRNA + S-adenosyl-L-homocysteine + H(+). Functionally, specifically methylates the N4 position of cytidine in position 1402 (C1402) of 16S rRNA. This chain is Ribosomal RNA small subunit methyltransferase H, found in Teredinibacter turnerae (strain ATCC 39867 / T7901).